An 812-amino-acid polypeptide reads, in one-letter code: Fibroblast growth factor receptor 1 (812 aa).

Residues 1–20 (MFSGMSLLLWGVLLGAALSV) form the signal peptide. Residues 21 to 371 (ARPPSTLPDE…PALLASPLQL (351 aa)) lie on the Extracellular side of the membrane. Positions 25-118 (STLPDEVAPK…YTVLCSVNVS (94 aa)) constitute an Ig-like C2-type 1 domain. Residues Cys-54 and Cys-100 are joined by a disulfide bond. Asn-76, Asn-116, Asn-133, Asn-223, Asn-236, Asn-260, Asn-292, Asn-313, and Asn-326 each carry an N-linked (GlcNAc...) asparagine glycan. The interval 121 to 153 (LPSAEDDDEDDDNSSSEEKAAENSKPNRPLWSH) is disordered. A compositionally biased stretch (acidic residues) spans 124–135 (AEDDDEDDDNSS). Ig-like C2-type domains are found at residues 154-242 (PEKM…YQLD) and 251-353 (PILQ…AWLT). An intrachain disulfide couples Cys-174 to Cys-226. The cysteines at positions 273 and 337 are disulfide-linked. Residues 372–393 (EIIIYCTGAAFVSAMVVTIIIF) form a helical membrane-spanning segment. Over 394–812 (KMKHPSKKSD…KYSNGGLKKR (419 aa)) the chain is Cytoplasmic. Tyr-457 is subject to Phosphotyrosine; by autocatalysis. The Protein kinase domain maps to 472 to 761 (LILGKPLGEG…LALSSNQEYL (290 aa)). ATP-binding positions include 478–484 (LGEGCFG), Lys-508, 556–558 (EYT), and Asn-562. Tyr-577 and Tyr-579 each carry phosphotyrosine; by autocatalysis. Asp-617 (proton acceptor) is an active-site residue. ATP is bound by residues Arg-621 and Asp-635. 4 positions are modified to phosphotyrosine; by autocatalysis: Tyr-647, Tyr-648, Tyr-724, and Tyr-760. The disordered stretch occupies residues 784–812 (SGEDSMFSHDPLPDEPCLPKYSNGGLKKR).

The protein belongs to the protein kinase superfamily. Tyr protein kinase family. Fibroblast growth factor receptor subfamily. Monomer. Homodimer after ligand binding. Interacts with il17rd. In terms of processing, autophosphorylated. Binding of FGF family members together with heparan sulfate proteoglycan or heparin promotes receptor dimerization and autophosphorylation on tyrosine residues. Autophosphorylation occurs in trans between the two FGFR molecules present in the dimer and proceeds in a highly ordered manner. Phosphotyrosine residues provide docking sites for interacting proteins and so are crucial for FGFR1 function and its regulation. Ubiquitinated. FGFR1 is rapidly ubiquitinated after autophosphorylation, leading to internalization and degradation. Post-translationally, N-glycosylated in the endoplasmic reticulum. The N-glycan chains undergo further maturation to an Endo H-resistant form in the Golgi apparatus.

It localises to the cell membrane. It is found in the nucleus. The protein localises to the cytoplasm. The protein resides in the cytosol. Its subcellular location is the cytoplasmic vesicle. It carries out the reaction L-tyrosyl-[protein] + ATP = O-phospho-L-tyrosyl-[protein] + ADP + H(+). With respect to regulation, present in an inactive conformation in the absence of bound ligand. Ligand binding leads to dimerization and activation by sequential autophosphorylation on tyrosine residues. Its function is as follows. Tyrosine-protein kinase that acts as a cell-surface receptor for fibroblast growth factors and plays an essential role in the regulation of embryonic development, cell proliferation, differentiation and migration. Required for normal mesoderm patterning and normal skeletogenesis. Phosphorylates PLCG1, FRS2, GAB1 and SHB. Ligand binding leads to the activation of several signaling cascades. Activation of PLCG1 leads to the production of the cellular signaling molecules diacylglycerol and inositol-1,4,5-trisphosphate. Phosphorylation of FRS2 triggers recruitment of GRB2, GAB1, PIK3R1 and SOS1, and mediates activation of RAS, MAPK1/ERK2, MAPK3/ERK1 and the MAP kinase signaling pathway, as well as of the AKT1 signaling pathway. Promotes phosphorylation of SHC1, STAT1 and PTPN11/SHP2. In the nucleus, enhances RPS6KA1 and CREB1 activity and contributes to the regulation of transcription. FGFR1 signaling is down-regulated by ubiquitination, internalization and degradation. The protein is Fibroblast growth factor receptor 1 (fgfr1) of Xenopus laevis (African clawed frog).